A 156-amino-acid polypeptide reads, in one-letter code: Small ribosomal subunit protein uS7 (156 aa).

The protein belongs to the universal ribosomal protein uS7 family. In terms of assembly, part of the 30S ribosomal subunit. Contacts proteins S9 and S11.

Its function is as follows. One of the primary rRNA binding proteins, it binds directly to 16S rRNA where it nucleates assembly of the head domain of the 30S subunit. Is located at the subunit interface close to the decoding center, probably blocks exit of the E-site tRNA. The sequence is that of Small ribosomal subunit protein uS7 from Beutenbergia cavernae (strain ATCC BAA-8 / DSM 12333 / CCUG 43141 / JCM 11478 / NBRC 16432 / NCIMB 13614 / HKI 0122).